We begin with the raw amino-acid sequence, 184 residues long: Ribosome-recycling factor (184 aa).

It belongs to the RRF family.

The protein resides in the cytoplasm. Responsible for the release of ribosomes from messenger RNA at the termination of protein biosynthesis. May increase the efficiency of translation by recycling ribosomes from one round of translation to another. The sequence is that of Ribosome-recycling factor from Agathobacter rectalis (strain ATCC 33656 / DSM 3377 / JCM 17463 / KCTC 5835 / VPI 0990) (Eubacterium rectale).